A 396-amino-acid chain; its full sequence is Elongation factor Tu (396 aa).

Positions 10-206 constitute a tr-type G domain; it reads KPHVNIGTIG…AVDSYIPDPE (197 aa). Residues 19-26 form a G1 region; the sequence is GHVDHGKT. A GTP-binding site is contributed by 19–26; sequence GHVDHGKT. Residue Thr-26 participates in Mg(2+) binding. The interval 60 to 64 is G2; sequence GITIA. Positions 81–84 are G3; that stretch reads DCPG. GTP-binding positions include 81 to 85 and 136 to 139; these read DCPGH and NKAD. The interval 136 to 139 is G4; it reads NKAD. The G5 stretch occupies residues 174–176; sequence SAL.

It belongs to the TRAFAC class translation factor GTPase superfamily. Classic translation factor GTPase family. EF-Tu/EF-1A subfamily. In terms of assembly, monomer.

Its subcellular location is the cytoplasm. The enzyme catalyses GTP + H2O = GDP + phosphate + H(+). Its function is as follows. GTP hydrolase that promotes the GTP-dependent binding of aminoacyl-tRNA to the A-site of ribosomes during protein biosynthesis. The sequence is that of Elongation factor Tu from Pelobacter propionicus (strain DSM 2379 / NBRC 103807 / OttBd1).